A 978-amino-acid chain; its full sequence is Sensor histidine kinase TodS (978 aa).

The PAS 1 domain maps to 32-103 (CEEHARIIFD…TQKRLVETAS (72 aa)). The region spanning 108-162 (VRCDVEILGKSGGREVIAVDFSLLPICNEEGSIVYLLAEGRNITDKKKAEAMLAL) is the PAC 1 domain. In terms of domain architecture, Histidine kinase 1 spans 187-405 (KVSHELRTPL…LFQVKLPLNA (219 aa)). Phosphohistidine; by autocatalysis is present on histidine 190. The 116-residue stretch at 452–567 (RVLIVEDNPD…ELRARVSNLV (116 aa)) folds into the Response regulatory domain. Aspartate 500 carries the 4-aspartylphosphate modification. The PAS 2 domain occupies 611–681 (SEARWKAVYE…QRLANLLQGG (71 aa)). A PAC 2 domain is found at 685–737 (YSVERSYLCKNGSTIWANASVSLMPQRVGESPVILQIIDDITEKKQAQENLNQ). In terms of domain architecture, Histidine kinase 2 spans 757-974 (YIAHEINQPL…CFLVSIPARQ (218 aa)). Histidine 760 is subject to Phosphohistidine.

As to quaternary structure, homodimer. Binds as a dimer to a pseudopalindromic sequence. Autophosphorylated. Activation requires a sequential transfer of a phosphate group from a His in the primary transmitter domain, to an Asp in the receiver domain and to a His in the secondary transmitter domain.

It localises to the cytoplasm. It catalyses the reaction ATP + protein L-histidine = ADP + protein N-phospho-L-histidine.. Member of the two-component regulatory system TodS/TodT involved in the regulation of toluene degradation. Phosphorylates TodT via a four-step phosphorelay in response to toluene. The sequence is that of Sensor histidine kinase TodS (todS) from Pseudomonas putida (strain ATCC 700007 / DSM 6899 / JCM 31910 / BCRC 17059 / LMG 24140 / F1).